Consider the following 220-residue polypeptide: Cell division protein DedD (220 aa).

Residues 9 to 29 form a helical membrane-spanning segment; the sequence is LVGTIVLVALGVIVLPGLLDG. Disordered regions lie at residues 46–84 and 97–137; these read KAGD…AAPS and FEPE…EEKA. Residues 57–70 show a composition bias toward low complexity; it reads PAATQALPTQPPEG. The segment covering 100–109 has biased composition (pro residues); that stretch reads EPAPVAPPKP. Composition is skewed to basic and acidic residues over residues 110–119 and 127–137; these read KPVEPPKPKV and PEPKPVVEEKA. Residues 138 to 217 form the SPOR domain; that stretch reads APTGKAYVVQ…SGLSGVVMGY (80 aa).

Belongs to the DedD family.

The protein resides in the cell inner membrane. Functionally, non-essential cell division protein that could be required for efficient cell constriction. The chain is Cell division protein DedD from Escherichia coli (strain K12).